Reading from the N-terminus, the 541-residue chain is Thioredoxin reductase (541 aa).

Residues 51–52 (PG), 71–74 (DYVK), 87–88 (TC), 92–96 (GCVPK), Ala-161, Asp-357, and 364–366 (ELA) contribute to the FAD site. A disulfide bond links Cys-88 and Cys-93. The tract at residues 438-452 (HRQKHIRAQKDEYDL) is loop important for the interaction with TRX1. FAD is bound at residue His-509. His-509 serves as the catalytic Proton acceptor. Cys-535 and Cys-540 are oxidised to a cystine.

Belongs to the class-I pyridine nucleotide-disulfide oxidoreductase family. As to quaternary structure, homodimer. FAD serves as cofactor.

The protein localises to the cytoplasm. The enzyme catalyses [thioredoxin]-dithiol + NADP(+) = [thioredoxin]-disulfide + NADPH + H(+). Catalyzes the transfer of electrons from NADPH to thioredoxins TRX1, TRX2 and TRX3, which in turn act as reductants of disulfide containing proteins. Able to reduce nitroglutathione (GSNO), a compound involved in the transport of nitric oxide (NO); however, TRX1 is more efficient in reducing GSNO. Has no catalytic activity towards oxidized glutathione (GSSG). In Plasmodium falciparum (isolate FCH-5), this protein is Thioredoxin reductase.